The primary structure comprises 380 residues: Adaptive-response sensory kinase SasA (380 aa).

Residues 20–101 (LLFVANRPGD…QKVDYWWPRW (82 aa)) are kaiB-like domain, interacts with KaiC. Residues 157 to 380 (LLAHELRNPL…CFHFTLPVYS (224 aa)) enclose the Histidine kinase domain. At His-160 the chain carries Phosphohistidine; by autocatalysis.

Homotrimer with a small amount of possible homohexamer; a protein fragment of 109-380 is also a homotrimer. Interacts with KaiC, probably as 1 SasA trimer:1 KaiC homohexamer; unphosphorylated SasA has the highest affinity. Homodimer. Binds to the B-loop in the CI domain of KaiC; SasA and KaiB(fs) compete to bind to the CI domain. Binds preferentially to doubly phosphorylated KaiC. Post-translationally, autophosphorylates, probably on His-160.

The enzyme catalyses ATP + protein L-histidine = ADP + protein N-phospho-L-histidine.. In terms of biological role, member of the two-component regulatory system SasA/RpaA involved in genome-wide circadian gene expression. One of several clock output pathways. Participates in the Kai clock protein complex, the main circadian regulator in cyanobacteria, via its interaction with KaiC. KaiC enhances the autophosphorylation activity of SasA, which then transfers its phosphate group to RpaA to activate it. In addition to its output function, recruits fold-shifted KaiB (KaiB(fs)) to KaiC to cooperatively form the KaiB(6):KaiC(6) complex (independent of SasA kinase activity). Required for robustness of the circadian rhythm of gene expression and is involved in clock output, also required for adaptation to light/dark cycles. This is Adaptive-response sensory kinase SasA from Thermosynechococcus vestitus (strain NIES-2133 / IAM M-273 / BP-1).